The sequence spans 450 residues: Protein tweety homolog 1 (450 aa).

Over 1 to 43 (MGAPPGYRPSAWVHLLHQLPRADFQLRPVPSGFAPRDQEYQQA) the chain is Extracellular. A helical transmembrane segment spans residues 44 to 64 (LLLVAALAGLGLGLSLIFIAV). The Cytoplasmic portion of the chain corresponds to 65-88 (YLIRFCCCRPPEPPGAKSPPPGGG). Residues 89 to 109 (CVTWSCIAALLVGCAGIGIGF) form a helical membrane-spanning segment. Residues 110 to 214 (YGNSETSDGV…DVTFVEEYRW (105 aa)) are Extracellular-facing. N130 carries an N-linked (GlcNAc...) asparagine glycan. Residues 215–235 (LAYVLLLLLVLLVCLFTLLGL) form a helical membrane-spanning segment. The Cytoplasmic portion of the chain corresponds to 236-240 (AKQSK). A helical membrane pass occupies residues 241–261 (WLVVVMTAMSLLVLVLSWGSM). The Extracellular segment spans residues 262–390 (GLEAATAVGL…LRGLCEDALE (129 aa)). Cystine bridges form between C275-C385 and C303-C370. Residues N284 and N355 are each glycosylated (N-linked (GlcNAc...) asparagine). The helical transmembrane segment at 391-411 (GLLFLMLFSLLSAGALATTLC) threads the bilayer. Residues 412–450 (SLPRAWALFPPSDDYDDTDDDDPFNPQESKRFVQWQSSI) lie on the Cytoplasmic side of the membrane. Residues 428–450 (DTDDDDPFNPQESKRFVQWQSSI) form a disordered region. At S440 the chain carries Phosphoserine.

This sequence belongs to the tweety family. Homotetramer; disulfide-linked. Homodimer. In terms of processing, N-glycosylated. Contains high-mannose, hybrid and complex oligosaccharides.

It localises to the cell membrane. The catalysed reaction is chloride(in) = chloride(out). It carries out the reaction L-glutamate(out) = L-glutamate(in). In terms of biological role, calcium-independent, swelling-dependent volume-regulated anion channel (VRAC-swell) which plays a pivotal role in the process of regulatory volume decrease (RVD) in the brain through the efflux of anions like chloride and organic osmolytes like glutamate. The sequence is that of Protein tweety homolog 1 (Ttyh1) from Rattus norvegicus (Rat).